The primary structure comprises 601 residues: Glutamine--fructose-6-phosphate aminotransferase [isomerizing] (601 aa).

The Nucleophile; for GATase activity role is filled by C2. In terms of domain architecture, Glutamine amidotransferase type-2 spans 2 to 214 (CGITGYIGTD…NGDIAHLTET (213 aa)). 2 consecutive SIS domains span residues 281 to 420 (STET…ARNA) and 453 to 591 (IGRE…IDKP). The For Fru-6P isomerization activity role is filled by K596.

Homodimer.

It is found in the cytoplasm. The catalysed reaction is D-fructose 6-phosphate + L-glutamine = D-glucosamine 6-phosphate + L-glutamate. In terms of biological role, catalyzes the first step in hexosamine metabolism, converting fructose-6P into glucosamine-6P using glutamine as a nitrogen source. The sequence is that of Glutamine--fructose-6-phosphate aminotransferase [isomerizing] from Halobacterium salinarum (strain ATCC 700922 / JCM 11081 / NRC-1) (Halobacterium halobium).